The following is a 382-amino-acid chain: Gap junction alpha-1 protein (382 aa).

Residues 2-23 are Cytoplasmic-facing; that stretch reads GDWSALGKLLDKVQAYSTAGGK. The residue at position 5 (Ser-5) is a Phosphoserine. The helical transmembrane segment at 24–44 threads the bilayer; the sequence is VWLSVLFIFRILLLGTAVESA. Topologically, residues 45–76 are extracellular; that stretch reads WGDEQSAFRCNTQQPGCENVCYDKSFPISHVR. 2 cysteine pairs are disulfide-bonded: Cys-54–Cys-192 and Cys-187–Cys-198. Residues 77-97 form a helical membrane-spanning segment; that stretch reads FWVLQIIFVSVPTLLYLAHVF. At 98–155 the chain is on the cytoplasmic side; that stretch reads YVMRKEEKLNKKEEELKVAQTDGVNVEMHLKQIEIKKFKYGIEEHGKVKMRGGLLRTY. A Glycyl lysine isopeptide (Lys-Gly) (interchain with G-Cter in SUMO) cross-link involves residue Lys-144. A helical transmembrane segment spans residues 156 to 176; it reads IISILFKSVFEVAFLLIQWYI. Topologically, residues 177–207 are extracellular; that stretch reads YGFSLSAVYTCKRDPCPHQVDCFLSRPTEKT. The chain crosses the membrane as a helical span at residues 208–228; that stretch reads IFIIFMLVVSLVSLALNIIEL. Residues 229–382 are Cytoplasmic-facing; that stretch reads FYVFFKGVKD…SRPRPDDLEI (154 aa). Residue Lys-237 forms a Glycyl lysine isopeptide (Lys-Gly) (interchain with G-Cter in SUMO) linkage. The interval 244–382 is interaction with NOV; it reads SDPYHATTGP…SRPRPDDLEI (139 aa). Position 247 is a phosphotyrosine (Tyr-247). Phosphoserine occurs at positions 255, 257, and 262. The interval 264–382 is interaction with UBQLN4; sequence KYAYFNGCSS…SRPRPDDLEI (119 aa). Residue Cys-271 is modified to S-nitrosocysteine. The residue at position 275 (Thr-275) is a Phosphothreonine. Ser-306 and Ser-314 each carry phosphoserine. Residues 317–332 show a composition bias toward polar residues; that stretch reads QNRMGQAGSTISNSHA. The disordered stretch occupies residues 317–382; the sequence is QNRMGQAGST…SRPRPDDLEI (66 aa). Ser-325 carries the phosphoserine; by CK1 modification. A Phosphothreonine modification is found at Thr-326. Residues Ser-328 and Ser-330 each carry the phosphoserine; by CK1 modification. Phosphoserine is present on residues Ser-344 and Ser-365. The span at 362-374 shows a compositional bias: low complexity; it reads RPSSRASSRASSR. Ser-368 is modified (phosphoserine; by PKC/PRKCG and PKC/PRKCD). Residues Ser-369 and Ser-373 each carry the phosphoserine modification.

Belongs to the connexin family. Alpha-type (group II) subfamily. A connexon is composed of a hexamer of connexins. Interacts with SGSM3. Interacts with RIC1/CIP150. Interacts with CNST and CSNK1D. Interacts (via C-terminus) with TJP1. Interacts (via C-terminus) with SRC (via SH3 domain). Interacts (not ubiquitinated) with UBQLN4 (via UBA domain). Interacts with NOV. Interacts with TMEM65. Interacts with ANK3/ANKG and PKP2. In terms of processing, phosphorylation at Ser-325, Ser-328 and Ser-330 by CK1 modulates gap junction assembly. Phosphorylated at Ser-368 by PRKCG; phosphorylation induces disassembly of gap junction plaques and inhibition of gap junction activity. Phosphorylation at Ser-368 by PRKCD triggers its internalization into small vesicles leading to proteasome-mediated degradation. Sumoylated with SUMO1, SUMO2 and SUMO3, which may regulate the level of functional Cx43 gap junctions at the plasma membrane. May be desumoylated by SENP1 or SENP2. Post-translationally, S-nitrosylation at Cys-271 is enriched at the muscle endothelial gap junction in arteries, it augments channel permeability and may regulate of smooth muscle cell to endothelial cell communication. In terms of processing, acetylated in the developing cortex; leading to delocalization from the cell membrane.

Its subcellular location is the cell membrane. It localises to the cell junction. The protein resides in the gap junction. It is found in the endoplasmic reticulum. Functionally, gap junction protein that acts as a regulator of bladder capacity. A gap junction consists of a cluster of closely packed pairs of transmembrane channels, the connexons, through which materials of low MW diffuse from one cell to a neighboring cell. May play a critical role in the physiology of hearing by participating in the recycling of potassium to the cochlear endolymph. Negative regulator of bladder functional capacity: acts by enhancing intercellular electrical and chemical transmission, thus sensitizing bladder muscles to cholinergic neural stimuli and causing them to contract. May play a role in cell growth inhibition through the regulation of NOV expression and localization. Plays an essential role in gap junction communication in the ventricles. The sequence is that of Gap junction alpha-1 protein (GJA1) from Ursus americanus (American black bear).